A 554-amino-acid chain; its full sequence is 2-succinyl-5-enolpyruvyl-6-hydroxy-3-cyclohexene-1-carboxylate synthase (554 aa).

The protein belongs to the TPP enzyme family. MenD subfamily. Homodimer. The cofactor is Mg(2+). Requires Mn(2+) as cofactor. It depends on thiamine diphosphate as a cofactor.

The enzyme catalyses isochorismate + 2-oxoglutarate + H(+) = 5-enolpyruvoyl-6-hydroxy-2-succinyl-cyclohex-3-ene-1-carboxylate + CO2. Its pathway is quinol/quinone metabolism; 1,4-dihydroxy-2-naphthoate biosynthesis; 1,4-dihydroxy-2-naphthoate from chorismate: step 2/7. The protein operates within quinol/quinone metabolism; menaquinone biosynthesis. Catalyzes the thiamine diphosphate-dependent decarboxylation of 2-oxoglutarate and the subsequent addition of the resulting succinic semialdehyde-thiamine pyrophosphate anion to isochorismate to yield 2-succinyl-5-enolpyruvyl-6-hydroxy-3-cyclohexene-1-carboxylate (SEPHCHC). This is 2-succinyl-5-enolpyruvyl-6-hydroxy-3-cyclohexene-1-carboxylate synthase from Mycobacterium tuberculosis (strain ATCC 25177 / H37Ra).